Reading from the N-terminus, the 376-residue chain is Alpha-2,8-sialyltransferase 8E (376 aa).

Over 1–17 (MRYADPSANRDLLGSRT) the chain is Cytoplasmic. Residues 18–38 (LLFIFICAFALVTLLQQILYG) traverse the membrane as a helical; Signal-anchor for type II membrane protein segment. Over 39–376 (RNYIKRYFEF…RVHTGTCSCC (338 aa)) the chain is Lumenal. 2 N-linked (GlcNAc...) asparagine glycosylation sites follow: asparagine 56 and asparagine 96. Disulfide bonds link cysteine 164–cysteine 313 and cysteine 178–cysteine 373. Residues asparagine 192 and 214 to 216 (NPS) each bind substrate. Residues asparagine 241 and asparagine 284 are each glycosylated (N-linked (GlcNAc...) asparagine). Residue 300–302 (STG) participates in substrate binding. The Proton donor/acceptor role is filled by histidine 348.

Belongs to the glycosyltransferase 29 family. Expressed in fetal and adult brain, adult heart and skeletal muscle. As to expression, expressed in fetal and adult brain, not detected in adult heart and skeletal muscle.

Its subcellular location is the golgi apparatus membrane. It catalyses the reaction a ganglioside GT1b (d18:1(4E)) + CMP-N-acetyl-beta-neuraminate = a ganglioside GQ1b (d18:1(4E)) + CMP + H(+). The enzyme catalyses a ganglioside GD3 (d18:1(4E)) + CMP-N-acetyl-beta-neuraminate = a ganglioside GT3 (d18:1(4E)) + CMP + H(+). It carries out the reaction a ganglioside GD1a (d18:1(4E)) + CMP-N-acetyl-beta-neuraminate = a ganglioside GT1a (d18:1(4E)) + CMP + H(+). The catalysed reaction is a ganglioside GM1b (d18:1(4E)) + CMP-N-acetyl-beta-neuraminate = a ganglioside GD1c (d18:1(4E)) + CMP + H(+). It catalyses the reaction a ganglioside GQ1c (d18:1(4E)) + CMP-N-acetyl-beta-neuraminate = a ganglioside GP1c (d18:1(4E)) + CMP + H(+). It participates in protein modification; protein glycosylation. Functionally, involved in the synthesis of gangliosides GD1c, GT1a, GQ1b, GP1c and GT3 from GD1a, GT1b, GM1b and GD3 respectively. The polypeptide is Alpha-2,8-sialyltransferase 8E (Homo sapiens (Human)).